The chain runs to 132 residues: Small ribosomal subunit protein uS8 (132 aa).

This sequence belongs to the universal ribosomal protein uS8 family. In terms of assembly, part of the 30S ribosomal subunit. Contacts proteins S5 and S12.

Functionally, one of the primary rRNA binding proteins, it binds directly to 16S rRNA central domain where it helps coordinate assembly of the platform of the 30S subunit. In Clostridium botulinum (strain Alaska E43 / Type E3), this protein is Small ribosomal subunit protein uS8.